We begin with the raw amino-acid sequence, 169 residues long: NADH-quinone oxidoreductase subunit B (169 aa).

Positions 42, 43, 107, and 136 each coordinate [4Fe-4S] cluster.

This sequence belongs to the complex I 20 kDa subunit family. In terms of assembly, NDH-1 is composed of 14 different subunits. Subunits NuoB, C, D, E, F, and G constitute the peripheral sector of the complex. [4Fe-4S] cluster is required as a cofactor.

The protein localises to the cell inner membrane. It carries out the reaction a quinone + NADH + 5 H(+)(in) = a quinol + NAD(+) + 4 H(+)(out). Functionally, NDH-1 shuttles electrons from NADH, via FMN and iron-sulfur (Fe-S) centers, to quinones in the respiratory chain. The immediate electron acceptor for the enzyme in this species is believed to be ubiquinone. Couples the redox reaction to proton translocation (for every two electrons transferred, four hydrogen ions are translocated across the cytoplasmic membrane), and thus conserves the redox energy in a proton gradient. This chain is NADH-quinone oxidoreductase subunit B, found in Wolinella succinogenes (strain ATCC 29543 / DSM 1740 / CCUG 13145 / JCM 31913 / LMG 7466 / NCTC 11488 / FDC 602W) (Vibrio succinogenes).